A 473-amino-acid polypeptide reads, in one-letter code: Trehalose-6-phosphate synthase (473 aa).

Arg-10 contacts D-glucose 6-phosphate. UDP-alpha-D-glucose is bound at residue 21 to 22 (GG). Residues Tyr-76 and Asp-130 each contribute to the D-glucose 6-phosphate site. 2 residues coordinate UDP-alpha-D-glucose: Arg-262 and Lys-267. A D-glucose 6-phosphate-binding site is contributed by Arg-300. UDP-alpha-D-glucose contacts are provided by residues Phe-339 and 365–369 (LVAKE).

This sequence belongs to the glycosyltransferase 20 family. Homotetramer.

The enzyme catalyses D-glucose 6-phosphate + UDP-alpha-D-glucose = alpha,alpha-trehalose 6-phosphate + UDP + H(+). The protein operates within glycan biosynthesis; trehalose biosynthesis. Probably involved in the osmoprotection via the biosynthesis of trehalose. Catalyzes the transfer of glucose from UDP-alpha-D-glucose (UDP-Glc) to D-glucose 6-phosphate (Glc-6-P) to form trehalose-6-phosphate. Acts with retention of the anomeric configuration of the UDP-sugar donor. This is Trehalose-6-phosphate synthase from Citrobacter koseri (strain ATCC BAA-895 / CDC 4225-83 / SGSC4696).